We begin with the raw amino-acid sequence, 473 residues long: Cell division protein FtsP (473 aa).

The tat-type signal signal peptide spans 1–27 (MSLSRRQFIQASGLAMCLGALPFAVQA).

This sequence belongs to the FtsP family. In terms of processing, predicted to be exported by the Tat system. The position of the signal peptide cleavage has not been experimentally proven.

It localises to the periplasm. Cell division protein that is required for growth during stress conditions. May be involved in protecting or stabilizing the divisomal assembly under conditions of stress. This chain is Cell division protein FtsP, found in Xenorhabdus nematophila (strain ATCC 19061 / DSM 3370 / CCUG 14189 / LMG 1036 / NCIMB 9965 / AN6).